The primary structure comprises 2171 residues: Voltage-dependent L-type calcium channel subunit alpha-1C (2171 aa).

The Cytoplasmic portion of the chain corresponds to 1–154; the sequence is MLRALVQPAT…RACISIVEWK (154 aa). The interval 77 to 98 is calmodulin-binding; it reads GAALSWQAAIDAARQAKLMGSA. The tract at residues 103-128 is disordered; sequence ISTVSSTQRKRQQYGKPKKQGSTTAT. A compositionally biased stretch (basic residues) spans 110–121; it reads QRKRQQYGKPKK. Residues 141–438 form an I repeat; it reads NPIRRACISI…LVLGVLSGEF (298 aa). Residues 155–173 form a helical membrane-spanning segment; that stretch reads PFEIIILLTIFANCVALAI. The Extracellular segment spans residues 174–188; sequence YIPFPEDDSNATNSN. N183 carries an N-linked (GlcNAc...) asparagine glycan. Residues 189–209 traverse the membrane as a helical segment; that stretch reads LERVEYLFLIIFTVEAFLKVI. At 210-218 the chain is on the cytoplasmic side; it reads AYGLLFHPN. Residues 219–239 traverse the membrane as a helical segment; it reads AYLRNGWNLLDFIIVVVGLFS. The Extracellular portion of the chain corresponds to 240–262; that stretch reads AILEQATKADGANALGGKGAGFD. Residues 263 to 281 form a helical membrane-spanning segment; sequence VKALRAFRVLRPLRLVSGV. Residues 282 to 298 are Cytoplasmic-facing; that stretch reads PSLQVVLNSIIKAMVPL. Residues 299–320 form a helical membrane-spanning segment; the sequence is LHIALLVLFVIIIYAIIGLELF. Residues 321-380 lie on the Extracellular side of the membrane; that stretch reads MGKMHKTCYNQEGVADVPAEDDPSPCALETGHGRQCQNGTVCKPGWDGPKHGITNFDNFA. 2 disulfides stabilise this stretch: C328-C356 and C346-C362. N358 carries N-linked (GlcNAc...) asparagine glycosylation. Positions 381 to 402 form an intramembrane region, pore-forming; sequence FAMLTVFQCITMEGWTDVLYWM. The Selectivity filter of repeat I motif lies at 391–394; it reads TMEG. E393 provides a ligand contact to Ca(2+). Over 403-410 the chain is Extracellular; the sequence is QDAMGYEL. Residues 411 to 431 traverse the membrane as a helical segment; it reads PWVYFVSLVIFGSFFVLNLVL. The Cytoplasmic segment spans residues 432–554; the sequence is GVLSGEFSKE…RKCRAAVKSN (123 aa). Positions 458 to 475 are AID/alpha-interaction domain; mediates interaction with the beta subunit; the sequence is QQLEEDLKGYLDWITQAE. A disordered region spans residues 479–511; it reads PENEDEGMDEEKPRNMSMPTSETESVNTENVAG. A compositionally biased stretch (polar residues) spans 495-508; that stretch reads SMPTSETESVNTEN. S499 carries the post-translational modification Phosphoserine. Phosphothreonine is present on T506. Residues 540–786 form an II repeat; it reads NRFCRRKCRA…VFLAIAVDNL (247 aa). Residues 555–573 form a helical membrane-spanning segment; sequence VFYWLVIFLVFLNTLTIAS. Topologically, residues 574-584 are extracellular; the sequence is EHYNQPHWLTE. The chain crosses the membrane as a helical span at residues 585-605; it reads VQDTANKALLALFTAEMLLKM. At 606–616 the chain is on the cytoplasmic side; it reads YSLGLQAYFVS. A helical membrane pass occupies residues 617 to 636; it reads LFNRFDCFIVCGGILETILV. Topologically, residues 637–645 are extracellular; it reads ETKVMSPLG. The chain crosses the membrane as a helical span at residues 646–664; sequence ISVLRCVRLLRIFKITRYW. Residues 665–683 lie on the Cytoplasmic side of the membrane; it reads NSLSNLVASLLNSVRSIAS. The chain crosses the membrane as a helical span at residues 684–703; it reads LLLLLFLFIIIFSLLGMQLF. The Extracellular portion of the chain corresponds to 704–723; that stretch reads GGKFNFDEMQTRRSTFDNFP. The segment at residues 724-745 is an intramembrane region (pore-forming); sequence QSLLTVFQILTGEDWNSVMYDG. Residues 734–737 carry the Selectivity filter of repeat II motif; sequence TGED. E736 is a binding site for Ca(2+). Over 746 to 755 the chain is Extracellular; that stretch reads IMAYGGPSFP. Residues 756-775 form a helical membrane-spanning segment; it reads GMLVCIYFIILFICGNYILL. The Cytoplasmic portion of the chain corresponds to 776–930; it reads NVFLAIAVDN…LQCHRIVNDT (155 aa). The tract at residues 794–891 is disordered; it reads SAQKEEEEEK…EMPVGPRPRP (98 aa). The segment covering 813–836 has biased composition (basic and acidic residues); the sequence is SPEKKQEVVGKPALEEAKEEKIEL. Phosphoserine is present on residues S838 and S845. The tract at residues 859-906 is interaction with STAC2; sequence NESEDKSPYPNPETTGEEDEEEPEMPVGPRPRPLSELHLKEKAVPMPE. Acidic residues predominate over residues 873 to 882; that stretch reads TGEEDEEEPE. The III repeat unit spans residues 917 to 1199; sequence NRFRLQCHRI…IFVGFVIVTF (283 aa). A helical transmembrane segment spans residues 931-949; that stretch reads IFTNLILFFILLSSISLAA. The Extracellular segment spans residues 950 to 961; it reads EDPVQHTSFRNH. Residues 962–981 traverse the membrane as a helical segment; sequence ILFYFDIVFTTIFTIEIALK. Over 982–997 the chain is Cytoplasmic; that stretch reads MTAYGAFLHKGSFCRN. The helical transmembrane segment at 998-1016 threads the bilayer; sequence YFNILDLLVVSVSLISFGI. Topologically, residues 1017 to 1023 are extracellular; that stretch reads QSSAINV. Residues 1024-1042 traverse the membrane as a helical segment; it reads VKILRVLRVLRPLRAINRA. At 1043–1061 the chain is on the cytoplasmic side; the sequence is KGLKHVVQCVFVAIRTIGN. A helical transmembrane segment spans residues 1062–1081; the sequence is IVIVTTLLQFMFACIGVQLF. Residues 1082–1131 lie on the Extracellular side of the membrane; sequence KGKLYTCSDSSKQTEAECKGNYITYKDGEVDHPIIQPRSWENSKFDFDNV. C1088 and C1099 form a disulfide bridge. The tract at residues 1119–1208 is dihydropyridine binding; that stretch reads RSWENSKFDF…FQEQGEQEYK (90 aa). Residues 1132–1152 constitute an intramembrane region (pore-forming); sequence LAAMMALFTVSTFEGWPELLY. Positions 1143 to 1146 match the Selectivity filter of repeat III motif; sequence TFEG. Residue E1145 coordinates Ca(2+). At 1153-1169 the chain is on the extracellular side; that stretch reads RSIDSHTEDKGPIYNYR. A helical membrane pass occupies residues 1170-1191; the sequence is VEISIFFIIYIIIIAFFMMNIF. At 1192–1249 the chain is on the cytoplasmic side; that stretch reads VGFVIVTFQEQGEQEYKNCELDKNQRQCVEYALKARPLRRYIPKNQHQYKVWYVVNST. Residues 1236 to 1509 form an IV repeat; sequence NQHQYKVWYV…LFVAVIMDNF (274 aa). The chain crosses the membrane as a helical span at residues 1250–1271; sequence YFEYLMFVLILLNTICLAMQHY. Residues 1272-1279 are Extracellular-facing; the sequence is GQSCLFKI. A helical transmembrane segment spans residues 1280 to 1301; it reads AMNILNMLFTGLFTVEMILKLI. The Cytoplasmic portion of the chain corresponds to 1302 to 1311; the sequence is AFKPKGYFSD. A helical transmembrane segment spans residues 1312–1331; that stretch reads PWNVFDFLIVIGSIIDVILS. Residues 1332-1354 lie on the Extracellular side of the membrane; the sequence is ETNPAEHTQCSPSMNAEENSRIS. Residues 1355-1373 traverse the membrane as a helical segment; that stretch reads ITFFRLFRVMRLVKLLSRG. Topologically, residues 1374 to 1391 are cytoplasmic; that stretch reads EGIRTLLWTFIKSFQALP. A helical membrane pass occupies residues 1392-1412; it reads YVALLIVMLFFIYAVIGMQVF. Residues 1413-1434 are Extracellular-facing; it reads GKIALNDTTEINRNNNFQTFPQ. N1418 carries an N-linked (GlcNAc...) asparagine glycan. The segment at residues 1435 to 1453 is an intramembrane region (pore-forming); sequence AVLLLFRCATGEAWQDIML. The Selectivity filter of repeat IV signature appears at 1444–1447; it reads TGEA. At 1454 to 1481 the chain is on the extracellular side; that stretch reads ACMPGKKCAPESEPHNSTEGETPCGSSF. Residues 1460 to 1528 form a dihydropyridine binding region; sequence KCAPESEPHN…LGPHHLDEFK (69 aa). An intrachain disulfide couples C1461 to C1477. N-linked (GlcNAc...) asparagine glycosylation occurs at N1469. The phenylalkylamine binding stretch occupies residues 1474–1516; that stretch reads ETPCGSSFAVFYFISFYMLCAFLIINLFVAVIMDNFDYLTRDW. Residues 1482–1506 traverse the membrane as a helical segment; that stretch reads AVFYFISFYMLCAFLIINLFVAVIM. At 1507–2171 the chain is on the cytoplasmic side; that stretch reads DNFDYLTRDW…ADRRAGVSSL (665 aa). Residues 1641–1668 form an important for interaction with STAC1, STAC2 and STAC3 region; sequence DEVTVGKFYATFLIQEYFRKFKKRKEQG. Residues 1647–1667 are calmodulin-binding IQ region; the sequence is KFYATFLIQEYFRKFKKRKEQ. An important for localization in at the junctional membrane region spans residues 1681–1700; the sequence is LQAGLRTLHDIGPEIRRAIS. 2 positions are modified to phosphoserine: S1700 and S1721. The disordered stretch occupies residues 1760–1797; sequence ISKAGNNQGDTESPSHEKLVDSTFTPSSYSSTGSNANI. Positions 1781–1793 are enriched in polar residues; the sequence is STFTPSSYSSTGS. A Phosphoserine; by PKA modification is found at S1928. 3 disordered regions span residues 1971 to 2014, 2026 to 2060, and 2114 to 2155; these read RSHS…EKLN, SGEN…GRQF, and SGGA…PGCG. Residues 2130 to 2140 show a composition bias toward basic and acidic residues; it reads NRRDPGRDRAG.

This sequence belongs to the calcium channel alpha-1 subunit (TC 1.A.1.11) family. CACNA1C subfamily. As to quaternary structure, component of a calcium channel complex consisting of a pore-forming alpha subunit (CACNA1C) and ancillary beta, gamma and delta subunits. The channel complex contains alpha, beta, gamma and delta subunits in a 1:1:1:1 ratio, i.e. it contains only one of each type of subunit. CACNA1C channel activity is modulated by ancillary subunits, such as CACNB1, CACNB2, CACNB3, CACNA2D1 and CACNA2D4. Interacts with CACNB1. Interacts with CACNB2. Identified in a complex with CACNA2D4 and CACNB3. Interacts with CACNB3. Interacts with CACNA2D1. Interacts with the gamma subunits CACNG4, CACNG6, CACNG7 and CACNG8. Interacts with CACNA2D4. Interacts with CALM1. Interacts (via the N-terminus and the C-terminal C and IQ motifs) with CABP1; this inhibits Ca(2+)-dependent channel inactivation. The binding via the C motif is calcium independent whereas the binding via IQ requires the presence of calcium and is mutually exclusive with calmodulin binding. The binding to the cytoplasmic N-terminal domain is calcium independent but is essential for the channel modulation. Interacts (via C-terminal CDB motif) with CABP5; in a calcium-dependent manner. Interacts with CIB1; the interaction increases upon cardiomyocytes hypertrophy. Interacts with STAC1, STAC2 and STAC3; this inhibits channel inactivation, probably by hindering CALM1 binding. Phosphorylation by PKA at Ser-1928 activates the channel. Elevated levels of blood glucose lead to increased phosphorylation by PKA. Expression in cardiac muscle. In lung, expressed in airway and vascular smooth muscle cells.

It localises to the cell membrane. Its subcellular location is the sarcolemma. The protein localises to the perikaryon. It is found in the postsynaptic density membrane. The protein resides in the cell projection. It localises to the dendrite. Its subcellular location is the T-tubule. It carries out the reaction Ca(2+)(in) = Ca(2+)(out). Inhibited by dihydropyridines (DHP), such as isradipine. Inhibited by nifedipine. Channel activity is regulated by Ca(2+) and calmodulin. Binding of STAC1, STAC2 or STAC3 to a region that overlaps with the calmodulin binding site inhibits channel inactivation by Ca(2+) and calmodulin. Binding of calmodulin or CABP1 at the same regulatory sites results in opposite effects on the channel function. Shear stress and pressure increases calcium channel activity. Pore-forming, alpha-1C subunit of the voltage-gated calcium channel that gives rise to L-type calcium currents. Mediates influx of calcium ions into the cytoplasm, and thereby triggers calcium release from the sarcoplasm. Plays an important role in excitation-contraction coupling in the heart. Required for normal heart development and normal regulation of heart rhythm. Required for normal contraction of smooth muscle cells in blood vessels and in the intestine. Essential for normal blood pressure regulation via its role in the contraction of arterial smooth muscle cells. Long-lasting (L-type) calcium channels belong to the 'high-voltage activated' (HVA) group. This is Voltage-dependent L-type calcium channel subunit alpha-1C (CACNA1C) from Oryctolagus cuniculus (Rabbit).